The chain runs to 682 residues: Acetyl-coenzyme A synthetase 2-like, mitochondrial (682 aa).

The N-terminal 38 residues, 1–38 (MAARSLGSGVGRLLRGLQGRSGQSGWSLSVSRSTATRL), are a transit peptide targeting the mitochondrion. Residues 217–220 (RGGR) and Thr-334 contribute to the CoA site. Lys-389 is modified (N6-acetyllysine). ATP contacts are provided by residues 410-412 (GEP), 434-439 (DTWWQT), Asp-526, and Arg-541. Ser-549 provides a ligand contact to CoA. Arg-552 is an ATP binding site. Lys-635 is modified (N6-acetyllysine).

It belongs to the ATP-dependent AMP-binding enzyme family. In terms of assembly, interacts with SIRT3. In terms of processing, reversibly acetylated at Lys-635. The acetyl-CoA synthase activity is inhibited by acetylation and activated by deacetylation mediated by the deacetylase SIRT3. As to expression, highly expressed in heart, testis, kidney, skeletal muscle, lung and spleen. Detected at low levels in brain.

The protein resides in the mitochondrion matrix. It catalyses the reaction acetate + ATP + CoA = acetyl-CoA + AMP + diphosphate. The enzyme catalyses propanoate + ATP + CoA = propanoyl-CoA + AMP + diphosphate. With respect to regulation, inhibited by acetylation at Lys-635 and activated by deacetylation mediated by the deacetylase SIRT3. Catalyzes the synthesis of acetyl-CoA from short-chain fatty acids. Acetate is the preferred substrate. Can also utilize propionate with a much lower affinity. Provides acetyl-CoA that is utilized mainly for oxidation under ketogenic conditions. Involved in thermogenesis under ketogenic conditions, using acetate as a vital fuel when carbohydrate availability is insufficient. The sequence is that of Acetyl-coenzyme A synthetase 2-like, mitochondrial (Acss1) from Mus musculus (Mouse).